An 815-amino-acid polypeptide reads, in one-letter code: Protein SMAX1-LIKE 3 (815 aa).

The Clp R domain occupies 8 to 171 (VEQALTADAA…TKVEQAVSLE (164 aa)). Repeat regions lie at residues 12 to 80 (LTAD…LNRL) and 99 to 171 (ISNA…VSLE). The segment at 750 to 769 (SRACSPPSNQKSDGSDQPED) is disordered. The EAR signature appears at 778–782 (LDLNL).

Belongs to the ClpA/ClpB family. In terms of assembly, interacts probably with TPL/TPR in an EAR-motif dependent manner. Expressed in roots and seedlings.

Functionally, may function in a transcriptional corepressor complex. This is Protein SMAX1-LIKE 3 from Arabidopsis thaliana (Mouse-ear cress).